The chain runs to 162 residues: CD-NTase-associated protein 7 (162 aa).

Positions 138-162 are disordered; that stretch reads HSGLTQSGGREYSSNGYGMQRKDYN. Residues 139-154 are compositionally biased toward polar residues; sequence SGLTQSGGREYSSNGY.

It belongs to the HORMA family. HORMA1 subfamily. As to quaternary structure, forms complexes with CdnC with 1:1 and 2:2 stoichimetry, and a 1:1:6 CdnC:Cap7:Cap6 complex.

Functionally, sensor protein of a CBASS antivirus system. CBASS (cyclic oligonucleotide-based antiphage signaling system) provides immunity against bacteriophage. The CD-NTase protein synthesizes cyclic nucleotides in response to infection; these serve as specific second messenger signals. The signals activate a diverse range of effectors, leading to bacterial cell death and thus abortive phage infection. A type III CBASS system. Expression of this CBASS system (Cap18-Cap6-Cap7-CdnC-CapW-Cap17) in a susceptible E.coli (strain MG1655) confers resistance to bacteriophage P1. The sensor protein for this CBASS system. Binds to a closure peptide, which allows it to activate CdnC for second messenger synthesis. This is CD-NTase-associated protein 7 from Escherichia coli (strain KTE188).